A 435-amino-acid polypeptide reads, in one-letter code: MTTFSPREIVSELDRYIIGQHDAKRAVAIALRNRWRRQQLDPSLRDEVMPKNILMIGPTGVGKTEISRRLAKLAGAPFIKVEATKFTEVGYVGRDVEQIIRDLVEVGIGLMREKKRAEVQAKAHVSAEERVLDALVGTTASPATRENFRKKLRDGELDDKEIDIEVADAGSGMGGFEIPGMPGANIGVLNLSEMFGKAMGGRTKKVRTTVKASYTDLIRDESDKLIDNEVIQREAVRATENDGIVFLDEIDKIAARDGGMGAGVSREGVQRDLLPLVEGTTVSTKYGPVKTDHILFIASGAFHVSKPSDLLPELQGRLPIRVELRPLNKEDFRRILTETEASLIRQYRALMETENLNLDFTDDAIDALADVAVHLNSSVENIGARRLQTVMERVLDDISYNAPDRAGAAITIDAAYVREHVGDLAQNTDLSRFIL.

Residues Ile18, 60 to 65, Asp248, Glu313, and Arg385 each bind ATP; that span reads GVGKTE.

Belongs to the ClpX chaperone family. HslU subfamily. A double ring-shaped homohexamer of HslV is capped on each side by a ring-shaped HslU homohexamer. The assembly of the HslU/HslV complex is dependent on binding of ATP.

It is found in the cytoplasm. In terms of biological role, ATPase subunit of a proteasome-like degradation complex; this subunit has chaperone activity. The binding of ATP and its subsequent hydrolysis by HslU are essential for unfolding of protein substrates subsequently hydrolyzed by HslV. HslU recognizes the N-terminal part of its protein substrates and unfolds these before they are guided to HslV for hydrolysis. In Rhizobium etli (strain ATCC 51251 / DSM 11541 / JCM 21823 / NBRC 15573 / CFN 42), this protein is ATP-dependent protease ATPase subunit HslU.